The following is a 191-amino-acid chain: Holliday junction branch migration complex subunit RuvA (191 aa).

Positions 1–64 (MIGKLTGTLL…EDAQLLYGFA (64 aa)) are domain I. The domain II stretch occupies residues 65–140 (TAPERQAFRA…KLGADLGASH (76 aa)). The flexible linker stretch occupies residues 140 to 142 (HGP). The tract at residues 143–191 (AVSGAQADILQALLALGYNDKEAAAALKALPAQVEVSDGIKWALKALTK) is domain III.

This sequence belongs to the RuvA family. In terms of assembly, homotetramer. Forms an RuvA(8)-RuvB(12)-Holliday junction (HJ) complex. HJ DNA is sandwiched between 2 RuvA tetramers; dsDNA enters through RuvA and exits via RuvB. An RuvB hexamer assembles on each DNA strand where it exits the tetramer. Each RuvB hexamer is contacted by two RuvA subunits (via domain III) on 2 adjacent RuvB subunits; this complex drives branch migration. In the full resolvosome a probable DNA-RuvA(4)-RuvB(12)-RuvC(2) complex forms which resolves the HJ.

The protein localises to the cytoplasm. The RuvA-RuvB-RuvC complex processes Holliday junction (HJ) DNA during genetic recombination and DNA repair, while the RuvA-RuvB complex plays an important role in the rescue of blocked DNA replication forks via replication fork reversal (RFR). RuvA specifically binds to HJ cruciform DNA, conferring on it an open structure. The RuvB hexamer acts as an ATP-dependent pump, pulling dsDNA into and through the RuvAB complex. HJ branch migration allows RuvC to scan DNA until it finds its consensus sequence, where it cleaves and resolves the cruciform DNA. The sequence is that of Holliday junction branch migration complex subunit RuvA from Verminephrobacter eiseniae (strain EF01-2).